A 227-amino-acid polypeptide reads, in one-letter code: Glutathione S-transferase U13 (227 aa).

Residues 5–86 (DTVKLIGSWS…YVDEAWPSVP (82 aa)) form the GST N-terminal domain. Glutathione-binding positions include 15 to 16 (SP), 43 to 44 (EK), 57 to 58 (KV), and 70 to 71 (ES). The 133-residue stretch at 92–224 (DAYDRASARF…EVVAFAKQKF (133 aa)) folds into the GST C-terminal domain. Position 158 is a phosphothreonine (threonine 158).

This sequence belongs to the GST superfamily. Tau family.

It is found in the cytoplasm. Its subcellular location is the cytosol. It carries out the reaction RX + glutathione = an S-substituted glutathione + a halide anion + H(+). In vitro, possesses glutathione S-transferase activity toward 1-chloro-2,4-dinitrobenzene (CDNB) and benzyl isothiocyanate (BITC). May be involved in the conjugation of reduced glutathione to a wide number of exogenous and endogenous hydrophobic electrophiles and have a detoxification role against certain herbicides. In Arabidopsis thaliana (Mouse-ear cress), this protein is Glutathione S-transferase U13 (GSTU13).